Reading from the N-terminus, the 380-residue chain is Ribosomal RNA small subunit methyltransferase, mitochondrial (380 aa).

A mitochondrion-targeting transit peptide spans 1 to 26 (MILRLKDQTLIKINSTRSYLSSLVFR). S-adenosyl-L-methionine contacts are provided by H70, L72, G97, E118, D146, and N161.

This sequence belongs to the class I-like SAM-binding methyltransferase superfamily. rRNA adenine N(6)-methyltransferase family.

The protein localises to the mitochondrion. The catalysed reaction is adenosine(1914)/adenosine(1915) in 18S rRNA + 4 S-adenosyl-L-methionine = N(6)-dimethyladenosine(1914)/N(6)-dimethyladenosine(1915) in 18S rRNA + 4 S-adenosyl-L-homocysteine + 4 H(+). Functionally, N6-adenine methyltransferase which modifies the AA dinucleotide at the plant mitochondrial 18S rRNA nucleotides A1914 and A1915. Not active as mitochondrial transcription factor. The sequence is that of Ribosomal RNA small subunit methyltransferase, mitochondrial from Arabidopsis thaliana (Mouse-ear cress).